The following is a 630-amino-acid chain: Plastin-3 (630 aa).

EF-hand domains lie at 12–47 (DELD…ANMP) and 52–87 (KVRE…VKSS). Ca(2+) contacts are provided by D25, N27, N29, E36, D65, N67, D69, K71, and E76. 2 actin-binding regions span residues 109 to 382 (TSEL…ALTK) and 383 to 627 (PENQ…GRGM). Calponin-homology (CH) domains are found at residues 123-239 (EEEK…KIGL) and 267-378 (LSPE…NKYP). Phosphoserine occurs at positions 268, 293, 326, and 339. The residue at position 391 (T391) is a Phosphothreonine. 2 Calponin-homology (CH) domains span residues 397-506 (TREE…RRYT) and 518-627 (KAND…GRGM).

Monomer. In terms of tissue distribution, expressed in a variety of organs, including muscle, brain, uterus and esophagus.

It localises to the cytoplasm. Its function is as follows. Actin-bundling protein. The polypeptide is Plastin-3 (PLS3) (Homo sapiens (Human)).